Here is a 588-residue protein sequence, read N- to C-terminus: Pre-mRNA-splicing ATP-dependent RNA helicase PRP28 (588 aa).

The disordered stretch occupies residues 15–94 (NKKKGLDENT…PSKQNGSKFH (80 aa)). Basic and acidic residues-rich tracts occupy residues 35 to 49 (NKQE…KENE) and 60 to 83 (AKVE…DKKR). Position 69 is a phosphoserine (Ser-69). Residues 172-202 (RNWEELNIIPRDLLRVIIQELRFPSPTPIQR) carry the Q motif motif. Positions 208-399 (VCNMKQYRDF…AGYMQKPVYA (192 aa)) constitute a Helicase ATP-binding domain. 221-228 (ASTGSGKT) contributes to the ATP binding site. Residues 341–344 (DEAD) carry the DEAD box motif. Residues 427 to 579 (KLKPIVAKYD…EAVKNKYNVG (153 aa)) form the Helicase C-terminal domain.

This sequence belongs to the DEAD box helicase family. DDX23/PRP28 subfamily. As to quaternary structure, component of the U5 snRNP complex, composed of at least BRR2, PRP8, PRP28, DIB1, LIN1, SMB1, SMD1, SMD2, SMD3, SME1, SMX2, SMX3, and SNU114, associated with the U5 snRNA.

It is found in the cytoplasm. The protein localises to the nucleus. It catalyses the reaction ATP + H2O = ADP + phosphate + H(+). In terms of biological role, ATP-dependent RNA helicase involved in mRNA splicing. May destabilize the U1/5'-splice site duplex to permit an effective competition for the 5'-splice site by the U6 snRNA, resulting in the switch between U1 and U6 at the 5'-splice site. May also act to unwind the U4/U6 base-pairing interaction in the U4/U6/U5 snRNP, facilitating the first covalent step of splicing. This Saccharomyces cerevisiae (strain ATCC 204508 / S288c) (Baker's yeast) protein is Pre-mRNA-splicing ATP-dependent RNA helicase PRP28 (PRP28).